We begin with the raw amino-acid sequence, 350 residues long: Twinfilin-1 (350 aa).

S2 bears the N-acetylserine mark. Residues 2–139 (SHQTGIQASE…SLHGYKKYLL (138 aa)) enclose the ADF-H 1 domain. Phosphoserine is present on residues S143 and S277. Positions 177–313 (GVAFPISQEA…TADFLYEEVH (137 aa)) constitute an ADF-H 2 domain. At Y309 the chain carries Phosphotyrosine. Residues 316-350 (QHAHKQSFAKPKGPSGKRGIRRIIRGPAETEATTE) form a disordered region. Phosphothreonine is present on T349.

This sequence belongs to the actin-binding proteins ADF family. Twinfilin subfamily. Interacts with G-actin; ADP-actin form and capping protein (CP). May also be able to interact with TWF2 and phosphoinositides, PI(4,5)P2. When bound to PI(4,5)P2, it is down-regulated. Interacts with ACTG1. In terms of processing, phosphorylated on serine and threonine residues.

The protein resides in the cytoplasm. It localises to the cytoskeleton. Its function is as follows. Actin-binding protein involved in motile and morphological processes. Inhibits actin polymerization, likely by sequestering G-actin. By capping the barbed ends of filaments, it also regulates motility. Seems to play an important role in clathrin-mediated endocytosis and distribution of endocytic organelles. This chain is Twinfilin-1 (TWF1), found in Bos taurus (Bovine).